Here is a 546-residue protein sequence, read N- to C-terminus: Chaperonin GroEL (546 aa).

Residues 29–32, K50, 86–90, G414, and D492 contribute to the ATP site; these read TMGP and DGTTT.

The protein belongs to the chaperonin (HSP60) family. As to quaternary structure, forms a cylinder of 14 subunits composed of two heptameric rings stacked back-to-back. Interacts with the co-chaperonin GroES.

It localises to the cytoplasm. The catalysed reaction is ATP + H2O + a folded polypeptide = ADP + phosphate + an unfolded polypeptide.. In terms of biological role, together with its co-chaperonin GroES, plays an essential role in assisting protein folding. The GroEL-GroES system forms a nano-cage that allows encapsulation of the non-native substrate proteins and provides a physical environment optimized to promote and accelerate protein folding. In Helicobacter pylori (strain J99 / ATCC 700824) (Campylobacter pylori J99), this protein is Chaperonin GroEL.